A 96-amino-acid polypeptide reads, in one-letter code: Co-chaperonin GroES (96 aa).

This sequence belongs to the GroES chaperonin family. As to quaternary structure, heptamer of 7 subunits arranged in a ring. Interacts with the chaperonin GroEL.

The protein localises to the cytoplasm. In terms of biological role, together with the chaperonin GroEL, plays an essential role in assisting protein folding. The GroEL-GroES system forms a nano-cage that allows encapsulation of the non-native substrate proteins and provides a physical environment optimized to promote and accelerate protein folding. GroES binds to the apical surface of the GroEL ring, thereby capping the opening of the GroEL channel. This is Co-chaperonin GroES from Methylobacillus flagellatus (strain ATCC 51484 / DSM 6875 / VKM B-1610 / KT).